A 365-amino-acid chain; its full sequence is UDP-N-acetylglucosamine--N-acetylmuramyl-(pentapeptide) pyrophosphoryl-undecaprenol N-acetylglucosamine transferase (365 aa).

UDP-N-acetyl-alpha-D-glucosamine-binding positions include 19–21 (TGG), N131, R170, S201, I255, 274–279 (ALTVTE), and Q300.

This sequence belongs to the glycosyltransferase 28 family. MurG subfamily.

The protein localises to the cell inner membrane. It carries out the reaction di-trans,octa-cis-undecaprenyl diphospho-N-acetyl-alpha-D-muramoyl-L-alanyl-D-glutamyl-meso-2,6-diaminopimeloyl-D-alanyl-D-alanine + UDP-N-acetyl-alpha-D-glucosamine = di-trans,octa-cis-undecaprenyl diphospho-[N-acetyl-alpha-D-glucosaminyl-(1-&gt;4)]-N-acetyl-alpha-D-muramoyl-L-alanyl-D-glutamyl-meso-2,6-diaminopimeloyl-D-alanyl-D-alanine + UDP + H(+). It participates in cell wall biogenesis; peptidoglycan biosynthesis. Cell wall formation. Catalyzes the transfer of a GlcNAc subunit on undecaprenyl-pyrophosphoryl-MurNAc-pentapeptide (lipid intermediate I) to form undecaprenyl-pyrophosphoryl-MurNAc-(pentapeptide)GlcNAc (lipid intermediate II). This Acinetobacter baylyi (strain ATCC 33305 / BD413 / ADP1) protein is UDP-N-acetylglucosamine--N-acetylmuramyl-(pentapeptide) pyrophosphoryl-undecaprenol N-acetylglucosamine transferase.